The primary structure comprises 185 residues: Ribosome-recycling factor (185 aa).

Positions Ala-135–Glu-159 are disordered.

This sequence belongs to the RRF family.

Its subcellular location is the cytoplasm. Responsible for the release of ribosomes from messenger RNA at the termination of protein biosynthesis. May increase the efficiency of translation by recycling ribosomes from one round of translation to another. This chain is Ribosome-recycling factor, found in Campylobacter curvus (strain 525.92).